Here is a 98-residue protein sequence, read N- to C-terminus: Aspartyl/glutamyl-tRNA(Asn/Gln) amidotransferase subunit C (98 aa).

The protein belongs to the GatC family. As to quaternary structure, heterotrimer of A, B and C subunits.

The catalysed reaction is L-glutamyl-tRNA(Gln) + L-glutamine + ATP + H2O = L-glutaminyl-tRNA(Gln) + L-glutamate + ADP + phosphate + H(+). The enzyme catalyses L-aspartyl-tRNA(Asn) + L-glutamine + ATP + H2O = L-asparaginyl-tRNA(Asn) + L-glutamate + ADP + phosphate + 2 H(+). Allows the formation of correctly charged Asn-tRNA(Asn) or Gln-tRNA(Gln) through the transamidation of misacylated Asp-tRNA(Asn) or Glu-tRNA(Gln) in organisms which lack either or both of asparaginyl-tRNA or glutaminyl-tRNA synthetases. The reaction takes place in the presence of glutamine and ATP through an activated phospho-Asp-tRNA(Asn) or phospho-Glu-tRNA(Gln). The polypeptide is Aspartyl/glutamyl-tRNA(Asn/Gln) amidotransferase subunit C (Mycobacterium avium (strain 104)).